Here is a 116-residue protein sequence, read N- to C-terminus: MRHQCRVPLLGRPADQRKALLRGLTTQLIREGRVTTTKARAKALRDEAERMITLAKNGSLASRRRVLGYVYDKQLVHALFDKAPTRYGDRNGGYTRITRTVPRRGDNAEMAIIELV.

The protein belongs to the bacterial ribosomal protein bL17 family. Part of the 50S ribosomal subunit. Contacts protein L32.

This Synechococcus sp. (strain CC9311) protein is Large ribosomal subunit protein bL17.